Consider the following 304-residue polypeptide: Acetaldehyde dehydrogenase 2 (304 aa).

Residue Cys131 is the Acyl-thioester intermediate of the active site. NAD(+)-binding positions include 162-170 (SAGPGTRKN) and Asn273.

The protein belongs to the acetaldehyde dehydrogenase family.

It carries out the reaction acetaldehyde + NAD(+) + CoA = acetyl-CoA + NADH + H(+). The protein is Acetaldehyde dehydrogenase 2 of Dechloromonas aromatica (strain RCB).